A 911-amino-acid polypeptide reads, in one-letter code: Alpha-actinin-4 (911 aa).

An actin-binding region spans residues 1-269 (MVDYHAANQS…YVSSFYHAFS (269 aa)). The interval 12–26 (QYGPSSAGNGAGGGG) is interaction with VCL. Position 31 is a phosphotyrosine (Tyr-31). The interaction with VCL stretch occupies residues 40-61 (RDLLLDPAWEKQQRKTFTAWCN). 2 consecutive Calponin-homology (CH) domains span residues 50 to 154 (KQQR…LRFA) and 163 to 269 (TSAK…HAFS). An LXXLL motif motif is present at residues 84 to 88 (LMLLL). An interaction with VCL region spans residues 108–126 (KINNVNKALDFIASKGVKL). Lys-114 is subject to N6-acetyllysine. Positions 177–192 (TAPYKNVNVQNFHISW) are polyphosphoinositide (PIP2)-binding. Lys-214 is subject to N6-acetyllysine. Residue Thr-249 is modified to Phosphothreonine. 4 Spectrin repeats span residues 293-403 (HLME…WLLN), 413-518 (HLAE…ALEK), 528-639 (QLHL…ALLE), and 649-752 (HLRR…EVEN). An N6-acetyllysine mark is found at Lys-592 and Lys-625. At Ser-696 the chain carries Phosphoserine. The interval 736-911 (WEQLLTTIAR…STALYGESDL (176 aa)) is mediates interaction with MICALL2. 2 EF-hand domains span residues 765–800 (EQMQ…LGYD) and 806–841 (QGEA…ETTD). Asp-778 serves as a coordination point for Ca(2+). The residue at position 779 (Lys-779) is an N6-acetyllysine. Asp-780 and Glu-789 together coordinate Ca(2+). Lys-859 carries the post-translational modification N6-acetyllysine. Ser-909 bears the Phosphoserine mark.

This sequence belongs to the alpha-actinin family. Homodimer; antiparallel. Binds TRIM3 at the N-terminus. Interacts with MICALL2 (preferentially in opened conformation); stimulated by RAB13 activation. Identified in a complex with CASK, IQGAP1, MAGI2, NPHS1, SPTAN1 and SPTBN1. Identified in a IGF2BP1-dependent mRNP granule complex containing untranslated mRNAs. Component of the CART complex, at least composed of ACTN4, HGS/HRS, MYO5B and TRIM3. Interacts with MAGI1. Interacts with PDLIM2. Interacts with PPARG and RARA. Binds to VCL; this interaction triggers VCL conformational changes. Interacts with SEPTIN14. Interacts with IGSF8. In terms of tissue distribution, widely expressed.

It localises to the nucleus. The protein resides in the cytoplasm. It is found in the cell junction. Its subcellular location is the cytoskeleton. The protein localises to the stress fiber. It localises to the perinuclear region. In terms of biological role, F-actin cross-linking protein which is thought to anchor actin to a variety of intracellular structures. This is a bundling protein. Probably involved in vesicular trafficking via its association with the CART complex. The CART complex is necessary for efficient transferrin receptor recycling but not for EGFR degradation. Involved in tight junction assembly in epithelial cells probably through interaction with MICALL2. Links MICALL2 to the actin cytoskeleton and recruits it to the tight junctions. May also function as a transcriptional coactivator, stimulating transcription mediated by the nuclear hormone receptors PPARG and RARA. Association with IGSF8 regulates the immune synapse formation and is required for efficient T-cell activation. The sequence is that of Alpha-actinin-4 from Homo sapiens (Human).